Here is a 39-residue protein sequence, read N- to C-terminus: Photosystem II reaction center protein Psb30 (39 aa).

A helical transmembrane segment spans residues 12–32; it reads IFQLTFVALIMLAGPFVIFLL.

Belongs to the Psb30/Ycf12 family. In terms of assembly, PSII is composed of 1 copy each of membrane proteins PsbA, PsbB, PsbC, PsbD, PsbE, PsbF, PsbH, PsbI, PsbJ, PsbK, PsbL, PsbM, PsbT, PsbX, PsbY, PsbZ, Psb30/Ycf12, peripheral proteins PsbO, CyanoQ (PsbQ), PsbU, PsbV and a large number of cofactors. It forms dimeric complexes.

Its subcellular location is the cellular thylakoid membrane. A core subunit of photosystem II (PSII), probably helps stabilize the reaction center. The sequence is that of Photosystem II reaction center protein Psb30 from Microcystis aeruginosa (strain NIES-843 / IAM M-2473).